Here is a 181-residue protein sequence, read N- to C-terminus: Peptidyl-tRNA hydrolase (181 aa).

Position 14 (Tyr-14) interacts with tRNA. His-19 acts as the Proton acceptor in catalysis. Residues Tyr-62, Asn-64, and Asn-108 each coordinate tRNA.

The protein belongs to the PTH family. As to quaternary structure, monomer.

The protein resides in the cytoplasm. It carries out the reaction an N-acyl-L-alpha-aminoacyl-tRNA + H2O = an N-acyl-L-amino acid + a tRNA + H(+). Functionally, hydrolyzes ribosome-free peptidyl-tRNAs (with 1 or more amino acids incorporated), which drop off the ribosome during protein synthesis, or as a result of ribosome stalling. Its function is as follows. Catalyzes the release of premature peptidyl moieties from peptidyl-tRNA molecules trapped in stalled 50S ribosomal subunits, and thus maintains levels of free tRNAs and 50S ribosomes. This Campylobacter jejuni (strain RM1221) protein is Peptidyl-tRNA hydrolase.